Here is a 273-residue protein sequence, read N- to C-terminus: Glutamate racemase (273 aa).

Substrate is bound by residues D9–S10 and Y41–G42. C73 (proton donor/acceptor) is an active-site residue. N74–T75 is a substrate binding site. C183 (proton donor/acceptor) is an active-site residue. T184–H185 contacts substrate.

This sequence belongs to the aspartate/glutamate racemases family.

The catalysed reaction is L-glutamate = D-glutamate. The protein operates within cell wall biogenesis; peptidoglycan biosynthesis. Functionally, provides the (R)-glutamate required for cell wall biosynthesis. This is Glutamate racemase from Shewanella oneidensis (strain ATCC 700550 / JCM 31522 / CIP 106686 / LMG 19005 / NCIMB 14063 / MR-1).